The chain runs to 288 residues: Peroxisomal protein PEX21 (288 aa).

C5 is covalently cross-linked (Glycyl cysteine thioester (Cys-Gly) (interchain with G-Cter in ubiquitin)).

It belongs to the peroxin-21 family. As to quaternary structure, interacts with PEX7. Interacts with PEX13. Interacts with SES1. Post-translationally, monoubiquitinated at Cys-5; acts as a signal for PEX21 extraction and is required for proper export from peroxisomes and recycling.

Its subcellular location is the cytoplasm. The protein resides in the cytosol. It localises to the peroxisome. Functionally, receptor that mediates peroxisomal import of proteins containing a C-terminal PTS2-type peroxisomal targeting signal via its interaction with PEX7. Interaction with PEX7 only takes place when PEX7 is associated with cargo proteins containing a PTS2 peroxisomal targeting signal. PEX7 along with PTS2-containing cargo proteins are then translocated through the PEX13-PEX14 docking complex together with PEX21. Acts as an activator of the seryl-tRNA synthetase SES1 by increasing its binding to tRNA. The chain is Peroxisomal protein PEX21 (PEX21) from Saccharomyces cerevisiae (strain ATCC 204508 / S288c) (Baker's yeast).